Here is a 420-residue protein sequence, read N- to C-terminus: Hemocyanin 2-c chain (420 aa).

The segment covering 1–12 (DFGHSKKIRKNV) has biased composition (basic residues). The segment at 1–20 (DFGHSKKIRKNVHSLTAEEQ) is disordered. Residue H46 coordinates Cu cation. C52 and C63 are oxidised to a cystine. The Cu cation site is built by H66, H73, H185, H189, and H216. Cystine bridges form between C175–C242 and C335–C342.

Post-translationally, O-glycosylated. As to expression, hemolymph.

It is found in the secreted. Its subcellular location is the extracellular space. Its function is as follows. Hemocyanins are copper-containing oxygen carriers occurring freely dissolved in the hemolymph of many mollusks and arthropods. In Megathura crenulata (Giant keyhole limpet), this protein is Hemocyanin 2-c chain.